The primary structure comprises 481 residues: Tetratricopeptide repeat protein 29 (481 aa).

Over residues Met1–Thr18 the composition is skewed to low complexity. Residues Met1–Lys53 are disordered. TPR repeat units lie at residues Cys191–Ser224, Gln231–Leu264, Val271–Val310, Ala317–Ala350, Lys357–Ala390, and Tyr397–Leu430.

As to quaternary structure, interacts with TAX-1.

It localises to the cytoplasm. It is found in the cytoskeleton. The protein localises to the flagellum axoneme. Its function is as follows. Axonemal protein which is implicated in axonemal and/or peri-axonemal structure assembly and regulates flagellum assembly and beating. The chain is Tetratricopeptide repeat protein 29 from Trypanosoma brucei brucei (strain 927/4 GUTat10.1).